The primary structure comprises 310 residues: CRAL-TRIO domain-containing protein YKL091C (310 aa).

The region spanning Glu-101–Asn-274 is the CRAL-TRIO domain.

The polypeptide is CRAL-TRIO domain-containing protein YKL091C (Saccharomyces cerevisiae (strain ATCC 204508 / S288c) (Baker's yeast)).